Here is a 168-residue protein sequence, read N- to C-terminus: Venom nerve growth factor (168 aa).

The signal sequence occupies residues 1 to 18 (MSMLCYTLIIAFLIGIWA). Residues 19 to 123 (APKSEDNVSL…ADSLNRNIRA (105 aa)) constitute a propeptide that is removed on maturation. An N-linked (GlcNAc...) asparagine glycan is attached at Asn25. The tract at residues 48–70 (LKTSQNTDQHSPAPKKAEDQEFG) is disordered. Asn148 carries an N-linked (GlcNAc...) asparagine glycan.

Belongs to the NGF-beta family. Homodimer; non-covalently linked. As to expression, expressed by the venom gland.

It localises to the secreted. In terms of biological role, nerve growth factor is important for the development and maintenance of the sympathetic and sensory nervous systems. It stimulates division and differentiation of sympathetic and embryonic sensory neurons as well as basal forebrain cholinergic neurons in the brain. Its relevance in the snake venom is not clear. However, it has been shown to inhibit metalloproteinase-dependent proteolysis of platelet glycoprotein Ib alpha, suggesting a metalloproteinase inhibition to prevent metalloprotease autodigestion and/or protection against prey proteases. The protein is Venom nerve growth factor of Echis ocellatus (Ocellated saw-scaled viper).